The sequence spans 406 residues: Tyrosine--tRNA ligase (406 aa).

The 'HIGH' region motif lies at 51–60 (PTAPDLHLGH). Residues 236–240 (KMSKS) carry the 'KMSKS' region motif. Lysine 239 contributes to the ATP binding site. The region spanning 345-405 (IWICKAMVEG…GKRKFLRLIV (61 aa)) is the S4 RNA-binding domain.

Belongs to the class-I aminoacyl-tRNA synthetase family. TyrS type 2 subfamily. As to quaternary structure, homodimer.

The protein resides in the cytoplasm. The enzyme catalyses tRNA(Tyr) + L-tyrosine + ATP = L-tyrosyl-tRNA(Tyr) + AMP + diphosphate + H(+). Its function is as follows. Catalyzes the attachment of tyrosine to tRNA(Tyr) in a two-step reaction: tyrosine is first activated by ATP to form Tyr-AMP and then transferred to the acceptor end of tRNA(Tyr). The protein is Tyrosine--tRNA ligase of Wolinella succinogenes (strain ATCC 29543 / DSM 1740 / CCUG 13145 / JCM 31913 / LMG 7466 / NCTC 11488 / FDC 602W) (Vibrio succinogenes).